We begin with the raw amino-acid sequence, 94 residues long: Protein translocase subunit SecE (94 aa).

Positions 1 to 32 (MTDAVGSIDMPDAQDEAPDSKKSRKGGKRGKK) are disordered. Residues 22–32 (KSRKGGKRGKK) are compositionally biased toward basic residues. A helical transmembrane segment spans residues 65-85 (TVVIIFVVIMIGLVTLIDYGF).

It belongs to the SecE/SEC61-gamma family. In terms of assembly, component of the Sec protein translocase complex. Heterotrimer consisting of SecY, SecE and SecG subunits. The heterotrimers can form oligomers, although 1 heterotrimer is thought to be able to translocate proteins. Interacts with the ribosome. Interacts with SecDF, and other proteins may be involved. Interacts with SecA.

The protein resides in the cell membrane. Essential subunit of the Sec protein translocation channel SecYEG. Clamps together the 2 halves of SecY. May contact the channel plug during translocation. In Streptomyces lividans, this protein is Protein translocase subunit SecE.